The following is a 492-amino-acid chain: Trehalose-phosphatase (492 aa).

The disordered stretch occupies residues 1–55; that stretch reads MTETVTDQGKQRSSKLQKNEAAKDEQVEGKGKETLESGTDKSAEQNSSLLVGQPD. Positions 17–43 are enriched in basic and acidic residues; the sequence is QKNEAAKDEQVEGKGKETLESGTDKSA. Mg(2+)-binding residues include D213 and D215. D215 serves as the catalytic Proton donor/acceptor. Residue 332-334 coordinates substrate; the sequence is QRK. D424 lines the Mg(2+) pocket.

It belongs to the gob-1 trehalose phosphatase family. The cofactor is Mg(2+).

It carries out the reaction alpha,alpha-trehalose 6-phosphate + H2O = alpha,alpha-trehalose + phosphate. Inhibited by trehalose 6-sulfate. Its function is as follows. Catalyzes the hydrolysis of trehalose 6-phosphate to trehalose and phosphate; prevents the accumulation of toxic levels of trehalose 6-phosphate. This chain is Trehalose-phosphatase, found in Brugia malayi (Filarial nematode worm).